The following is a 592-amino-acid chain: Aspartate--tRNA ligase (592 aa).

E173 is a binding site for L-aspartate. An aspartate region spans residues 197-200 (QLFK). Residue R219 coordinates L-aspartate. ATP-binding positions include 219-221 (RDE) and Q228. H448 lines the L-aspartate pocket. E482 contributes to the ATP binding site. R489 contacts L-aspartate. Position 534–537 (534–537 (GLDR)) interacts with ATP.

The protein belongs to the class-II aminoacyl-tRNA synthetase family. Type 1 subfamily. As to quaternary structure, homodimer.

The protein resides in the cytoplasm. It carries out the reaction tRNA(Asp) + L-aspartate + ATP = L-aspartyl-tRNA(Asp) + AMP + diphosphate. Catalyzes the attachment of L-aspartate to tRNA(Asp) in a two-step reaction: L-aspartate is first activated by ATP to form Asp-AMP and then transferred to the acceptor end of tRNA(Asp). This is Aspartate--tRNA ligase from Shewanella baltica (strain OS155 / ATCC BAA-1091).